The following is a 717-amino-acid chain: MADPSSYRPKPGQIPDSPGVYKFRDEHRRVIYVGKAKNLRQRVANYFQDLANLHPRTRTMVTTAASVEWTVVSTEVEALQLEYSWIKEFDPRFNVKYRDDKSYPYLAVTLNEEFPRVQVMRGAKKKGVRYFGPYGHAWAIRETVDLMLRVFPVRTCSAGVFKNAARTGRPCLLGYIGKCSAPCVGRVTPEEHRELAEDFCDFMAGRTGTYIRRLEKDMMQAAEEMEYERAARLRDDAEALKRAMEKSAVVLADATDADLIAVAEDELEAALQIFHVRGGRVRGQRGWVTDKVEAVDTSGLVEHALQQLYGEERGDAVPKEVLVPALPEDPEAVSQWLADRRGSQVSLRIPQRGDKKDLMATVQRNAQQALGLHKTKRASDLTTRSRALEEIAEALGLDTAPLRIECYDISHLQGDDVVASMVVFEDGLARKSEYRRFQIKGFEGQDDVRSMHEVIGRRFKRYLQDKERTGEWEEAPEAAPGSASVHASATGPAATGQATAGPAAMGQAAAGPVSTGPAATGPVPAPELTAASPDDEPEPREDDGRPKRFAYPPQLVVVDGGQPQVAAARRALDELGIDDIAVCGLAKRLEEVWLPDDDDPVVLPRSSEGLYLLQRVRDEAHRFAITYQRAKRAKRIRSSPLDDVTGLGETRKQALIKHFGSVKKLRQATIDEICEVPGIGRRTAESVVAALATTAPAAPAVNTATGEIIEEDDGGSS.

Positions 16–95 (DSPGVYKFRD…IKEFDPRFNV (80 aa)) constitute a GIY-YIG domain. A UVR domain is found at 208–243 (GTYIRRLEKDMMQAAEEMEYERAARLRDDAEALKRA). The tract at residues 467–548 (ERTGEWEEAP…PREDDGRPKR (82 aa)) is disordered. Positions 477-522 (EAAPGSASVHASATGPAATGQATAGPAAMGQAAAGPVSTGPAATGP) are enriched in low complexity.

It belongs to the UvrC family. Interacts with UvrB in an incision complex.

It is found in the cytoplasm. Functionally, the UvrABC repair system catalyzes the recognition and processing of DNA lesions. UvrC both incises the 5' and 3' sides of the lesion. The N-terminal half is responsible for the 3' incision and the C-terminal half is responsible for the 5' incision. The protein is UvrABC system protein C of Streptomyces griseus subsp. griseus (strain JCM 4626 / CBS 651.72 / NBRC 13350 / KCC S-0626 / ISP 5235).